Reading from the N-terminus, the 407-residue chain is tRNA N6-adenosine threonylcarbamoyltransferase, mitochondrial (407 aa).

A mitochondrion-targeting transit peptide spans M1–R30. A divalent metal cation is bound by residues H145 and H149. Substrate is bound by residues L170–G174, D203, A217, E221, S328–N329, and S360. An a divalent metal cation-binding site is contributed by D361.

Belongs to the KAE1 / TsaD family. As to quaternary structure, homodimer. A divalent metal cation serves as cofactor.

The protein resides in the mitochondrion. The catalysed reaction is L-threonylcarbamoyladenylate + adenosine(37) in tRNA = N(6)-L-threonylcarbamoyladenosine(37) in tRNA + AMP + H(+). Functionally, required for the formation of a threonylcarbamoyl group on adenosine at position 37 (t(6)A37) in mitochondrial tRNAs that read codons beginning with adenine. Probably involved in the transfer of the threonylcarbamoyl moiety of threonylcarbamoyl-AMP (TC-AMP) to the N6 group of A37. Involved in mitochondrial genome maintenance. The chain is tRNA N6-adenosine threonylcarbamoyltransferase, mitochondrial (QRI7) from Saccharomyces cerevisiae (strain ATCC 204508 / S288c) (Baker's yeast).